The following is a 436-amino-acid chain: Nucleolar protein 4-like (436 aa).

The tract at residues 1–184 (MSDSTWMSAD…KMNDSEGMDP (184 aa)) is disordered. Positions 41-61 (SESGSGNGSSTLNPSTSSSTQ) are enriched in low complexity. Serine 130 is subject to Phosphoserine. Acidic residues predominate over residues 160 to 169 (ADDDDDDHDD). The segment covering 170 to 184 (HEDNDKMNDSEGMDP) has biased composition (basic and acidic residues). Phosphoserine is present on serine 295. Positions 351 to 366 (QPPASLQTGNHSNGPT) are enriched in polar residues. The interval 351–400 (QPPASLQTGNHSNGPTDLSMKGGASTTSTTPTPTPSSTSTSRPVPTAQLS) is disordered. Over residues 375 to 396 (STTSTTPTPTPSSTSTSRPVPT) the composition is skewed to low complexity.

The polypeptide is Nucleolar protein 4-like (NOL4L) (Homo sapiens (Human)).